Reading from the N-terminus, the 407-residue chain is Triose phosphate/phosphate translocator, chloroplastic (407 aa).

The transit peptide at 1–81 directs the protein to the chloroplast; the sequence is MESRVLSSGA…VKRDVLKPCS (81 aa). Residues 82 to 101 are Chloroplast intermembrane-facing; that stretch reads ATASDSAGDAAPVGFLAKYP. Residues 102–122 traverse the membrane as a helical segment; the sequence is FLVTGFFFFMWYFLNVIFNIL. The Lumenal segment spans residues 123–134; that stretch reads NKKIYNYFPYPY. A helical membrane pass occupies residues 135–155; the sequence is FVSVIHLAVGVVYCLGSWTVG. Over 156 to 212 the chain is Chloroplast intermembrane; the sequence is LPKRAPVDSNILKLLIPVGFCHALGHVTSNVSFAAVAVSFTHTIKALEPFFNAAASQ. A helical transmembrane segment spans residues 213-233; sequence FVLGQSIPISLWLSLAPVVIG. Residues 234–277 are Lumenal-facing; the sequence is VSMASLTELSFNWLGFISAMISNISFTYRSIYSKKAMTDMDSTN. The chain crosses the membrane as a helical span at residues 278–297; that stretch reads LYAYISIIALLFCIPPAVLF. Residues 298-375 are Chloroplast intermembrane-facing; sequence EGPQLLKHGF…IVFGNKISTQ (78 aa). A helical membrane pass occupies residues 376-396; sequence TAIGTSIAIAGVAIYSLIKAR. Residues 397 to 407 lie on the Lumenal side of the membrane; sequence IEEEKRRMKSA.

This sequence belongs to the TPT transporter family. TPT (TC 2.A.7.9) subfamily. Homodimer.

Its subcellular location is the plastid. The protein resides in the chloroplast membrane. Mediates the export of fixed carbons from the chloroplasts into the cytosol in the form of triose phosphates. In addition, it can also bind and transport phosphoenolpyruvate, thereby increasing the photosynthetic efficiency of C4-plants. The protein is Triose phosphate/phosphate translocator, chloroplastic (TPT) of Flaveria trinervia (Clustered yellowtops).